Here is a 430-residue protein sequence, read N- to C-terminus: MNFVEELRWRGMIHDIMPGTEEHLNKGMTSAYVGIDPTADSLHIGHLVGVMMLRHFQRAGHRPIALIGGATGMIGDPSMKSAERVLLDEATLRHNQDCIKQQLAKFLDFDSDAPNAAKLVNNYDWMKDYSFLGFIRDIGKHITVNYMMAKDSVKKRLSAESSTGLSFTEFSYQLLQGYDYLYLYRNEGCRLQMGGSDQWGNITTGTELIRRKDGGEAFALTCPLITKADGGKFGKTESGNIWLDPARTSPYAFYQFWLNVSDADAEKYIKIFTGLNQDEIAELASRQAEAPHLRPLQKRLAEEITVMVHSREAYDAAVEASEILFGKSTTEQLRKLDEATLLDVFAGVPQYHVERSRIATGISLVDLLADATDIFPSKGELRKTVKAGGVSLNKEKVADAEQTVGEDDLLSDRYLLAQKGKKSYYLIIVE.

Position 32 (Tyr32) interacts with L-tyrosine. A 'HIGH' region motif is present at residues 37 to 46 (PTADSLHIGH). Positions 172 and 176 each coordinate L-tyrosine. Residues 232–236 (KFGKT) carry the 'KMSKS' region motif. Lys235 contributes to the ATP binding site. Residues 362-430 (ISLVDLLADA…KKSYYLIIVE (69 aa)) enclose the S4 RNA-binding domain.

It belongs to the class-I aminoacyl-tRNA synthetase family. TyrS type 1 subfamily. Homodimer.

The protein resides in the cytoplasm. It catalyses the reaction tRNA(Tyr) + L-tyrosine + ATP = L-tyrosyl-tRNA(Tyr) + AMP + diphosphate + H(+). In terms of biological role, catalyzes the attachment of tyrosine to tRNA(Tyr) in a two-step reaction: tyrosine is first activated by ATP to form Tyr-AMP and then transferred to the acceptor end of tRNA(Tyr). The protein is Tyrosine--tRNA ligase of Porphyromonas gingivalis (strain ATCC BAA-308 / W83).